The chain runs to 228 residues: Cytochrome c oxidase subunit 2 (228 aa).

The Mitochondrial intermembrane segment spans residues 1 to 26 (MTTWANMNLQDSASPIMEQLIYFHDH). A helical transmembrane segment spans residues 27 to 48 (ALMIIIMILMVVSYMMIAMVFN). The Mitochondrial matrix portion of the chain corresponds to 49 to 62 (KYINRFLLEGQMIE). Residues 63-82 (LAWTIAPAVILIFIAVPSLR) form a helical membrane-spanning segment. Residues 83–228 (LLYLMDEINT…FINWILKMNM (146 aa)) lie on the Mitochondrial intermembrane side of the membrane. Positions 161, 196, 198, 200, 204, and 207 each coordinate Cu cation. Mg(2+) is bound at residue glutamate 198.

This sequence belongs to the cytochrome c oxidase subunit 2 family. As to quaternary structure, component of the cytochrome c oxidase (complex IV, CIV), a multisubunit enzyme composed of a catalytic core of 3 subunits and several supernumerary subunits. The complex exists as a monomer or a dimer and forms supercomplexes (SCs) in the inner mitochondrial membrane with ubiquinol-cytochrome c oxidoreductase (cytochrome b-c1 complex, complex III, CIII). Cu cation is required as a cofactor.

It localises to the mitochondrion inner membrane. The enzyme catalyses 4 Fe(II)-[cytochrome c] + O2 + 8 H(+)(in) = 4 Fe(III)-[cytochrome c] + 2 H2O + 4 H(+)(out). Functionally, component of the cytochrome c oxidase, the last enzyme in the mitochondrial electron transport chain which drives oxidative phosphorylation. The respiratory chain contains 3 multisubunit complexes succinate dehydrogenase (complex II, CII), ubiquinol-cytochrome c oxidoreductase (cytochrome b-c1 complex, complex III, CIII) and cytochrome c oxidase (complex IV, CIV), that cooperate to transfer electrons derived from NADH and succinate to molecular oxygen, creating an electrochemical gradient over the inner membrane that drives transmembrane transport and the ATP synthase. Cytochrome c oxidase is the component of the respiratory chain that catalyzes the reduction of oxygen to water. Electrons originating from reduced cytochrome c in the intermembrane space (IMS) are transferred via the dinuclear copper A center (CU(A)) of subunit 2 and heme A of subunit 1 to the active site in subunit 1, a binuclear center (BNC) formed by heme A3 and copper B (CU(B)). The BNC reduces molecular oxygen to 2 water molecules using 4 electrons from cytochrome c in the IMS and 4 protons from the mitochondrial matrix. This chain is Cytochrome c oxidase subunit 2 (COII), found in Periplaneta americana (American cockroach).